The chain runs to 4481 residues: Dynein axonemal heavy chain 17 (4481 aa).

The stem stretch occupies residues 1 to 1792 (MPDLRIDYLE…FANICDAQIK (1792 aa)). Residues 521-569 (LLYMCGGLLERPLILVEVVPRYSVMLEMFNTELDNAKLMYDAQMAASAD) form a Kelch 1 repeat. Residues 759 to 826 (ENVMEYIQEM…GRVANLNKRY (68 aa)) adopt a coiled-coil conformation. TPR repeat units lie at residues 1533-1566 (VVEA…YLET) and 1688-1722 (IWWT…QLNA). 4 AAA regions span residues 1793–2014 (YSYE…VLVV), 2074–2295 (KIIK…IGFK), 2401–2649 (ELDP…IFQG), and 2747–2996 (SYNE…ERRY). Residues 1831–1838 (GPAGTGKT) and 2112–2119 (GNAGSGKS) contribute to the ATP site. Residues 2229–2275 (ISHLRTATPATVSRAGILYINPADLGWNPVVSSWIERRKVQSEKANL) form a Kelch 2 repeat. ATP contacts are provided by residues 2439–2446 (GNAGTGKS) and 2785–2792 (GVGGSGKQ). Residues 2782 to 2834 (LLVGVGGSGKQSLSRLAAYISALDVFQITLKKGYAIPDLKMDLATQYIKSAVK) form a Kelch 3 repeat. Coiled coils occupy residues 3011 to 3071 (YQNL…IQVV) and 3241 to 3293 (DVAP…EKIK). A stalk region spans residues 3011–3297 (YQNLLAKKRM…TAEKIKCQQE (287 aa)). AAA stretches follow at residues 3389-3616 (LTDD…EIEE) and 3826-4059 (VKNF…VLYN). A TPR 3 repeat occupies 4138 to 4173 (PESPYLYGLHPNAEIGFLTVTSEKLFRTVLEMQPKE). Kelch repeat units lie at residues 4272-4321 (NLGL…DLLQ) and 4339-4385 (VWLA…DMTA).

Belongs to the dynein heavy chain family. In terms of assembly, consists of at least two heavy chains and a number of intermediate and light chains.

It localises to the cytoplasm. The protein localises to the cytoskeleton. It is found in the flagellum axoneme. Force generating protein component of the outer dynein arms (ODAs) in the sperm flagellum. Produces force towards the minus ends of microtubules. Dynein has ATPase activity; the force-producing power stroke is thought to occur on release of ADP. Plays a major role in sperm motility, implicated in sperm flagellar assembly and beating. This Mus musculus (Mouse) protein is Dynein axonemal heavy chain 17.